The primary structure comprises 344 residues: uncharacterized protein (344 aa).

Helical transmembrane passes span 53–73 (FVVG…VSVW), 84–104 (WPIL…GYNI), 153–173 (IYPL…LYLL), 189–209 (FGAW…LEML), and 275–295 (IASE…VGVF).

Belongs to the steroid 5-alpha reductase family.

The protein resides in the endoplasmic reticulum membrane. This is an uncharacterized protein from Schizosaccharomyces pombe (strain 972 / ATCC 24843) (Fission yeast).